A 121-amino-acid chain; its full sequence is Small ribosomal subunit protein bS6 (121 aa).

Residues 99–121 (PSLMMRNVEREEARKTQQQEFAA) are disordered. The segment covering 105–115 (NVEREEARKTQ) has biased composition (basic and acidic residues).

Belongs to the bacterial ribosomal protein bS6 family.

Binds together with bS18 to 16S ribosomal RNA. This Polaromonas naphthalenivorans (strain CJ2) protein is Small ribosomal subunit protein bS6.